The following is a 327-amino-acid chain: Selenate reductase subunit beta (327 aa).

3 consecutive 4Fe-4S ferredoxin-type domains span residues 6 to 35, 124 to 155, and 157 to 186; these read LAYV…RDGR, NHYF…KREE, and GLVV…FNLQ. The [4Fe-4S] cluster site is built by C15, C18, C21, C25, C133, C136, and C141. The [3Fe-4S] cluster site is built by C145, C166, and C172. C176, C193, C196, C208, and C212 together coordinate [4Fe-4S] cluster.

Heterotrimer of alpha (SerA), beta (SerB) and gamma (SerC) subunits. It depends on [3Fe-4S] cluster as a cofactor. [4Fe-4S] cluster is required as a cofactor.

It localises to the periplasm. It catalyses the reaction selenite + 2 Fe(III)-[cytochrome c] + H2O = 2 Fe(II)-[cytochrome] + selenate + 2 H(+). Enzyme isolated from cells grown in a tungstate rich environment shows a 20-fold reduction in selenate reductase activity. Functionally, component of the selenate reductase, which catalyzes the reduction of selenate to selenite and allows anaerobic growth with selenate as the sole terminal electron acceptor. A c-type di-heme cytochrome of the cytc4 family was shown to donate electrons to the selenate reductase in vitro. SerABC can also use reduced benzyl viologen or reduced methyl viologen as an electron donor. This subunit transfers electrons from SerC to SerA. The reductase is specific for selenate, and cannot reduce nitrate, nitrite, chlorate or sulfate. The protein is Selenate reductase subunit beta of Thauera selenatis.